The primary structure comprises 165 residues: uncharacterized protein (165 aa).

This is an uncharacterized protein from Invertebrate iridescent virus 6 (IIV-6).